We begin with the raw amino-acid sequence, 887 residues long: Exosome complex component 10 (887 aa).

The segment covering 1–10 has biased composition (basic and acidic residues); that stretch reads MAPPSPREHQ. The segment at 1-23 is disordered; the sequence is MAPPSPREHQSAPATSATKPDAE. A Glycyl lysine isopeptide (Lys-Gly) (interchain with G-Cter in SUMO2) cross-link involves residue Lys-19. One can recognise a 3'-5' exonuclease domain in the interval 289–455; it reads HLVSSLDELV…YIYDRMRLEL (167 aa). Residues Asp-313, Glu-315, Asp-371, and Asp-440 each contribute to the Mg(2+) site. In terms of domain architecture, HRDC spans 503 to 583; sequence NSQQLTAFQL…QQAREMPLLK (81 aa). A Glycyl lysine isopeptide (Lys-Gly) (interchain with G-Cter in SUMO1); alternate cross-link involves residue Lys-583. Lys-583 participates in a covalent cross-link: Glycyl lysine isopeptide (Lys-Gly) (interchain with G-Cter in SUMO2); alternate. A Glycyl lysine isopeptide (Lys-Gly) (interchain with G-Cter in SUMO2) cross-link involves residue Lys-710. 2 disordered regions span residues 734–757 and 777–887; these read KEPKEATKKKVAEQTAAREEAKEE and NATK…WPKR. Residues 778–796 are compositionally biased toward basic and acidic residues; the sequence is ATKKRERATSDLRTIEQKQ. At Ser-823 the chain carries Phosphoserine. Glycyl lysine isopeptide (Lys-Gly) (interchain with G-Cter in SUMO2) cross-links involve residues Lys-835, Lys-861, and Lys-875.

It belongs to the exosome component 10/RRP6 family. As to quaternary structure, component of the RNA exosome complex. The catalytically inactive RNA exosome core complex (Exo-9) associates with the catalytic subunit EXOSC10/RRP6 (via its N-terminus). Exo-9 may associate with DIS3 to form the nucleolar exosome complex, or DIS3L to form the cytoplasmic exosome complex. The RNA exosome complex interacts with cofactors C1D/RRP47, MPHOSPH6/MPP6 and MTREX/MTR4. Interacts with MTREX; the interaction with MTREX mediates the association of MTREX with nuclear RNA exosomes. Part of the small subunit (SSU) processome, composed of more than 70 proteins and the RNA chaperone small nucleolar RNA (snoRNA) U3. Interacts with ALYREF/THOC4. Interacts with DHX36; this interaction occurs in a RNase-insensitive manner. Interacts with NRDE2. Interacts (via C-terminus) with USP36 (via C-terminus); the interaction is facilitated by the association with RNA and promotes sumoylation of EXOSC10. Mg(2+) is required as a cofactor. Sumoylated by USP36; sumoylation does not significantly affect EXOSC10 nucleolar localization and association with core exosome and USP36, but regulates the nucleolar RNA exosome activity in rRNA processing by promoting binding of EXOSC10 to pre-rRNAs. Effects of sumoylation on EXOSC10 levels vary between different studies. Sumoylation of EXOSC10 is required for the modulation of EXOSC10 effects on cellular protein translation and cell proliferation. Sumoylation is promoted by mild hypothermia. In terms of tissue distribution, expressed in ovary (at protein level). Expressed in testis (at protein level). Expressed in lung (at protein level).

The protein localises to the cytoplasm. Its subcellular location is the nucleus. It is found in the nucleolus. It localises to the nucleoplasm. Catalytic component of the RNA exosome complex which has 3'-&gt;5' exoribonuclease activity and participates in a multitude of cellular RNA processing and degradation events. In the nucleus, the RNA exosome complex is involved in proper maturation of stable RNA species such as rRNA, snRNA and snoRNA, in the elimination of RNA processing by-products and non-coding 'pervasive' transcripts, such as antisense RNA species and promoter-upstream transcripts (PROMPTs), and of mRNAs with processing defects, thereby limiting or excluding their export to the cytoplasm. Part of the small subunit (SSU) processome, first precursor of the small eukaryotic ribosomal subunit. During the assembly of the SSU processome in the nucleolus, many ribosome biogenesis factors, an RNA chaperone and ribosomal proteins associate with the nascent pre-rRNA and work in concert to generate RNA folding, modifications, rearrangements and cleavage as well as targeted degradation of pre-ribosomal RNA by the RNA exosome. The RNA exosome may be involved in Ig class switch recombination (CSR) and/or Ig variable region somatic hypermutation (SHM) by targeting AICDA deamination activity to transcribed dsDNA substrates. In the cytoplasm, the RNA exosome complex is involved in general mRNA turnover and specifically degrades inherently unstable mRNAs containing AU-rich elements (AREs) within their 3' untranslated regions, and in RNA surveillance pathways, preventing translation of aberrant mRNAs. It seems to be involved in degradation of histone mRNA. EXOSC10 is required for nucleolar localization of C1D and probably mediates the association of MTREX, C1D and MPHOSPH6 with the RNA exosome involved in the maturation of 5.8S rRNA. Plays a role in the recruitment of replication protein A complex (RPA) and RAD51 to DNA double-strand breaks caused by irradiation, contributing to DNA repair by homologous recombination. Regulates levels of damage-induced RNAs in order to prevent DNA-RNA hybrid formation at DNA double-strand breaks and limit DNA end resection after damage. Plays a role in oocyte development, maturation and survival. Required for normal testis development and mitotic division of spermatogonia. Plays a role in proper embryo development. Required for global protein translation. Required for cell proliferation. This is Exosome complex component 10 (Exosc10) from Mus musculus (Mouse).